A 1957-amino-acid chain; its full sequence is Chromatin modification-related protein EAF1 A (1957 aa).

Disordered regions lie at residues Ala108 to Val208, Asn261 to Thr287, Gly323 to Asn373, and Asn449 to Lys469. Positions Ser140–Leu151 are enriched in basic and acidic residues. Composition is skewed to polar residues over residues Asn261–Thr270, Gly333–Asn342, and Thr355–Ala372. One can recognise an HSA domain in the interval Cys563–Ser641. Disordered regions lie at residues Gly833–Lys909 and Ala928–Trp950. The segment covering Thr884 to Tyr898 has biased composition (polar residues). Residues Ser1049–Lys1105 enclose the SANT domain. 7 disordered regions span residues Ala1107–Pro1131, Thr1282–Ser1314, Leu1344–His1367, Gln1449–Asn1644, Pro1687–Ala1768, Glu1804–Ser1840, and Ser1876–Glu1957. Composition is skewed to polar residues over residues Asp1116–Ser1125, Ala1290–Ser1314, Leu1344–Ala1358, Ser1459–Val1472, Leu1479–Leu1492, and Gln1501–Gln1510. Low complexity-rich tracts occupy residues Gln1523–Gln1534 and Val1545–Gln1562. The segment covering Thr1563–Pro1579 has biased composition (pro residues). Composition is skewed to polar residues over residues Asn1582 to Gln1595, Ser1604 to Lys1618, Arg1635 to Asn1644, Asp1691 to Pro1722, and Gln1734 to Leu1758. Residues Ser1759–Ala1768 are compositionally biased toward low complexity. The segment covering Leu1805–Pro1815 has biased composition (basic and acidic residues). Polar residues-rich tracts occupy residues Gln1819 to Thr1832 and Ser1876 to Leu1894. Basic and acidic residues-rich tracts occupy residues Ser1913–Glu1922 and Leu1932–Glu1942.

The protein belongs to the EAF1 family. Component of the NuA4 histone acetyltransferase complex. Interacts with ARP4 and SWC4, and (via HSA domain) with TAF14 and TAF14B. In terms of tissue distribution, expressed in leaves.

The protein resides in the nucleus. In terms of biological role, component of the NuA4 histone acetyltransferase complex which is involved in transcriptional activation of selected genes principally by acetylation of nucleosomal histone H4 and H2A. This is Chromatin modification-related protein EAF1 A (EAF1A) from Arabidopsis thaliana (Mouse-ear cress).